A 207-amino-acid polypeptide reads, in one-letter code: Holliday junction branch migration complex subunit RuvA (207 aa).

The segment at 1-65 is domain I; that stretch reads MYDYIRGTLT…ETEHLLYGFH (65 aa). The tract at residues 66–144 is domain II; it reads SREERECFRI…DLLPLDSRVE (79 aa). Residues 145–150 form a flexible linker region; that stretch reads TSQTHT. Residues 150 to 207 form a domain III region; sequence TTSSCLEEGIQALAALGYSKIAAERMIAEAIKDLPEGSSLTDILPIALKKNFSGVNKD.

Belongs to the RuvA family. As to quaternary structure, homotetramer. Forms an RuvA(8)-RuvB(12)-Holliday junction (HJ) complex. HJ DNA is sandwiched between 2 RuvA tetramers; dsDNA enters through RuvA and exits via RuvB. An RuvB hexamer assembles on each DNA strand where it exits the tetramer. Each RuvB hexamer is contacted by two RuvA subunits (via domain III) on 2 adjacent RuvB subunits; this complex drives branch migration. In the full resolvosome a probable DNA-RuvA(4)-RuvB(12)-RuvC(2) complex forms which resolves the HJ.

It is found in the cytoplasm. Functionally, the RuvA-RuvB-RuvC complex processes Holliday junction (HJ) DNA during genetic recombination and DNA repair, while the RuvA-RuvB complex plays an important role in the rescue of blocked DNA replication forks via replication fork reversal (RFR). RuvA specifically binds to HJ cruciform DNA, conferring on it an open structure. The RuvB hexamer acts as an ATP-dependent pump, pulling dsDNA into and through the RuvAB complex. HJ branch migration allows RuvC to scan DNA until it finds its consensus sequence, where it cleaves and resolves the cruciform DNA. This chain is Holliday junction branch migration complex subunit RuvA, found in Chlamydia pneumoniae (Chlamydophila pneumoniae).